Consider the following 122-residue polypeptide: Ribonuclease P protein component (122 aa).

Belongs to the RnpA family. In terms of assembly, consists of a catalytic RNA component (M1 or rnpB) and a protein subunit.

It catalyses the reaction Endonucleolytic cleavage of RNA, removing 5'-extranucleotides from tRNA precursor.. Its function is as follows. RNaseP catalyzes the removal of the 5'-leader sequence from pre-tRNA to produce the mature 5'-terminus. It can also cleave other RNA substrates such as 4.5S RNA. The protein component plays an auxiliary but essential role in vivo by binding to the 5'-leader sequence and broadening the substrate specificity of the ribozyme. The polypeptide is Ribonuclease P protein component (Lactobacillus johnsonii (strain CNCM I-12250 / La1 / NCC 533)).